The primary structure comprises 135 residues: Small ribosomal subunit protein eS6 (135 aa).

Belongs to the eukaryotic ribosomal protein eS6 family.

The sequence is that of Small ribosomal subunit protein eS6 from Halorubrum lacusprofundi (strain ATCC 49239 / DSM 5036 / JCM 8891 / ACAM 34).